The chain runs to 462 residues: Arginine biosynthesis bifunctional protein ArgJ, mitochondrial (462 aa).

Residues Thr189, Lys215, Thr236, Glu327, Asn457, and Ser462 each contribute to the substrate site. Residue Thr236 is the Nucleophile of the active site.

Belongs to the ArgJ family. As to quaternary structure, heterodimer of an alpha and a beta chain. In terms of processing, the alpha and beta chains are autoproteolytically processed from a single precursor protein within the mitochondrion.

The protein resides in the mitochondrion matrix. The enzyme catalyses N(2)-acetyl-L-ornithine + L-glutamate = N-acetyl-L-glutamate + L-ornithine. It catalyses the reaction L-glutamate + acetyl-CoA = N-acetyl-L-glutamate + CoA + H(+). Its pathway is amino-acid biosynthesis; L-arginine biosynthesis; L-ornithine and N-acetyl-L-glutamate from L-glutamate and N(2)-acetyl-L-ornithine (cyclic): step 1/1. It functions in the pathway amino-acid biosynthesis; L-arginine biosynthesis; N(2)-acetyl-L-ornithine from L-glutamate: step 1/4. In terms of biological role, catalyzes two activities which are involved in the cyclic version of arginine biosynthesis: the synthesis of acetylglutamate from glutamate and acetyl-CoA, and of ornithine by transacetylation between acetylornithine and glutamate. The chain is Arginine biosynthesis bifunctional protein ArgJ, mitochondrial from Postia placenta (strain ATCC 44394 / Madison 698-R) (Brown rot fungus).